Here is a 129-residue protein sequence, read N- to C-terminus: Small ribosomal subunit protein uS11 (129 aa).

The protein belongs to the universal ribosomal protein uS11 family. As to quaternary structure, part of the 30S ribosomal subunit. Interacts with proteins S7 and S18. Binds to IF-3.

In terms of biological role, located on the platform of the 30S subunit, it bridges several disparate RNA helices of the 16S rRNA. Forms part of the Shine-Dalgarno cleft in the 70S ribosome. This Idiomarina loihiensis (strain ATCC BAA-735 / DSM 15497 / L2-TR) protein is Small ribosomal subunit protein uS11.